We begin with the raw amino-acid sequence, 512 residues long: Inosine-5'-monophosphate dehydrogenase (512 aa).

2 CBS domains span residues 110–169 (FIMK…SAPV) and 173–231 (MTRR…PNSS). NAD(+) is bound by residues 268–270 (DSS) and 318–320 (GMG). G320 and G322 together coordinate K(+). S323 serves as a coordination point for IMP. K(+) is bound at residue C325. C325 functions as the Thioimidate intermediate in the catalytic mechanism. Residues 358–360 (DGG), 381–382 (GS), and 405–409 (YRGMG) each bind IMP. The active-site Proton acceptor is R423. Q435 is an IMP binding site. E494 and G495 together coordinate K(+). A Microbody targeting signal motif is present at residues 510–512 (SKL).

The protein belongs to the IMPDH/GMPR family. In terms of assembly, homotetramer. K(+) serves as cofactor.

It is found in the glycosome. The enzyme catalyses IMP + NAD(+) + H2O = XMP + NADH + H(+). The protein operates within purine metabolism; XMP biosynthesis via de novo pathway; XMP from IMP: step 1/1. With respect to regulation, mycophenolic acid (MPA) is a non-competitive inhibitor that prevents formation of the closed enzyme conformation by binding to the same site as the amobile flap. In contrast, mizoribine monophosphate (MZP) is a competitive inhibitor that induces the closed conformation. MPA is a potent inhibitor of mammalian IMPDHs but a poor inhibitor of the bacterial enzymes. MZP is a more potent inhibitor of bacterial IMPDH. Catalyzes the conversion of inosine 5'-phosphate (IMP) to xanthosine 5'-phosphate (XMP), the first committed and rate-limiting step in the de novo synthesis of guanine nucleotides, and therefore plays an important role in the regulation of cell growth. This Trypanosoma brucei brucei protein is Inosine-5'-monophosphate dehydrogenase.